A 241-amino-acid chain; its full sequence is CRISPR-associated endoribonuclease Cas6 2 (241 aa).

Tyr28 serves as the catalytic Proton acceptor. The active-site Proton donor is His40.

It belongs to the CRISPR-associated protein Cas6/Cse3/CasE family.

Functionally, CRISPR (clustered regularly interspaced short palindromic repeat) is an adaptive immune system that provides protection against mobile genetic elements (viruses, transposable elements and conjugative plasmids). CRISPR clusters contain sequences complementary to antecedent mobile elements and target invading nucleic acids. CRISPR clusters are transcribed and processed into CRISPR RNA (crRNA). This protein processes pre-crRNA into individual crRNA units. This chain is CRISPR-associated endoribonuclease Cas6 2 (cas6b), found in Methanocaldococcus jannaschii (strain ATCC 43067 / DSM 2661 / JAL-1 / JCM 10045 / NBRC 100440) (Methanococcus jannaschii).